The sequence spans 190 residues: Probable chorismate pyruvate-lyase (190 aa).

Substrate-binding residues include Arg77, Leu115, and Glu174.

Belongs to the UbiC family.

It is found in the cytoplasm. The enzyme catalyses chorismate = 4-hydroxybenzoate + pyruvate. It participates in cofactor biosynthesis; ubiquinone biosynthesis. Removes the pyruvyl group from chorismate, with concomitant aromatization of the ring, to provide 4-hydroxybenzoate (4HB) for the ubiquinone pathway. This chain is Probable chorismate pyruvate-lyase, found in Shewanella sp. (strain MR-4).